The chain runs to 338 residues: MYG1 protein YER156C (338 aa).

It belongs to the MYG1 family.

This is MYG1 protein YER156C from Saccharomyces cerevisiae (strain ATCC 204508 / S288c) (Baker's yeast).